The chain runs to 386 residues: Ferredoxin--NADP reductase (386 aa).

The 59-residue stretch at 9-67 (SRMFRYEVVGLRQTAETEKTNYAIRNSGSQFFNVPYDRMNQFMQQITRWGGKIVSIQPL) folds into the CpcD-like domain. The FAD-binding FR-type domain occupies 104-228 (NNPCIGKVIS…TGPVGKEMLL (125 aa)). FAD-binding positions include 163-166 (RLYS), 184-186 (CVR), tyrosine 190, 202-204 (VCS), and threonine 243. Serine 166 and arginine 186 together coordinate NADP(+). Residues threonine 243, 275-276 (VA), 305-306 (SR), 315-319 (KMYIQ), 344-345 (GL), and glutamate 384 contribute to the NADP(+) site.

Belongs to the ferredoxin--NADP reductase type 1 family. FAD is required as a cofactor.

The protein resides in the cellular thylakoid membrane. The catalysed reaction is 2 reduced [2Fe-2S]-[ferredoxin] + NADP(+) + H(+) = 2 oxidized [2Fe-2S]-[ferredoxin] + NADPH. The protein is Ferredoxin--NADP reductase (petH) of Thermosynechococcus vestitus (strain NIES-2133 / IAM M-273 / BP-1).